Here is a 566-residue protein sequence, read N- to C-terminus: Urease subunit alpha (566 aa).

Residues 128 to 566 (GGIDTHIHFI…LPMAQRYFLF (439 aa)) form the Urease domain. Residues His133, His135, and Lys216 each coordinate Ni(2+). Lys216 is modified (N6-carboxylysine). Residue His218 coordinates substrate. Positions 245 and 271 each coordinate Ni(2+). Catalysis depends on His319, which acts as the Proton donor. Residue Asp359 participates in Ni(2+) binding.

Belongs to the metallo-dependent hydrolases superfamily. Urease alpha subunit family. As to quaternary structure, heterotrimer of UreA (gamma), UreB (beta) and UreC (alpha) subunits. Three heterotrimers associate to form the active enzyme. Ni cation is required as a cofactor. Post-translationally, carboxylation allows a single lysine to coordinate two nickel ions.

The protein localises to the cytoplasm. It carries out the reaction urea + 2 H2O + H(+) = hydrogencarbonate + 2 NH4(+). The protein operates within nitrogen metabolism; urea degradation; CO(2) and NH(3) from urea (urease route): step 1/1. This is Urease subunit alpha from Pseudomonas fluorescens (strain Pf0-1).